The following is a 248-amino-acid chain: UPF0736 protein BCG9842_B4111 (248 aa).

Belongs to the UPF0736 family.

This chain is UPF0736 protein BCG9842_B4111, found in Bacillus cereus (strain G9842).